Consider the following 698-residue polypeptide: Elongation factor G 1 (698 aa).

One can recognise a tr-type G domain in the interval 8-290 (ERYRNIGICA…AVIEFLPAPV (283 aa)). GTP-binding positions include 17 to 24 (AHVDAGKT), 88 to 92 (DTPGH), and 142 to 145 (NKMD).

The protein belongs to the TRAFAC class translation factor GTPase superfamily. Classic translation factor GTPase family. EF-G/EF-2 subfamily.

It is found in the cytoplasm. Catalyzes the GTP-dependent ribosomal translocation step during translation elongation. During this step, the ribosome changes from the pre-translocational (PRE) to the post-translocational (POST) state as the newly formed A-site-bound peptidyl-tRNA and P-site-bound deacylated tRNA move to the P and E sites, respectively. Catalyzes the coordinated movement of the two tRNA molecules, the mRNA and conformational changes in the ribosome. The polypeptide is Elongation factor G 1 (Aliivibrio fischeri (strain ATCC 700601 / ES114) (Vibrio fischeri)).